The following is a 358-amino-acid chain: Aminodeoxyfutalosine deaminase (358 aa).

Zn(2+) is bound by residues histidine 32 and histidine 34. Residues arginine 87, aspartate 154, and glycine 188 each contribute to the substrate site. Histidine 215 is a Zn(2+) binding site. The Proton donor role is filled by glutamate 218. Position 296 (aspartate 296) interacts with Zn(2+).

Belongs to the metallo-dependent hydrolases superfamily. Adenosine and AMP deaminases family. It depends on Zn(2+) as a cofactor.

It carries out the reaction 6-amino-6-deoxyfutalosine + H2O + H(+) = futalosine + NH4(+). It functions in the pathway quinol/quinone metabolism; menaquinone biosynthesis. Its function is as follows. Catalyzes the deamination of aminodeoxyfutalosine (AFL) into futalosine (FL), a step in the biosynthesis of menaquinone (MK, vitamin K2). To a lesser extent, can also deaminate adenosine, 5'-methylthioadenosine, 5'-deoxyadenosine, and 2'-deoxyadenosine. The protein is Aminodeoxyfutalosine deaminase (add2) of Streptomyces avermitilis (strain ATCC 31267 / DSM 46492 / JCM 5070 / NBRC 14893 / NCIMB 12804 / NRRL 8165 / MA-4680).